The sequence spans 644 residues: Arginine--tRNA ligase (644 aa).

Residues 129–139 carry the 'HIGH' region motif; sequence ANPIHPLHLGH.

The protein belongs to the class-I aminoacyl-tRNA synthetase family.

It localises to the cytoplasm. It catalyses the reaction tRNA(Arg) + L-arginine + ATP = L-arginyl-tRNA(Arg) + AMP + diphosphate. The sequence is that of Arginine--tRNA ligase (argS) from Aeropyrum pernix (strain ATCC 700893 / DSM 11879 / JCM 9820 / NBRC 100138 / K1).